The sequence spans 191 residues: dCTP deaminase, dUMP-forming (191 aa).

DCTP-binding positions include 101–106, D119, 127–129, Q148, Y162, and Q174; these read KSSLGR and TLE. E129 acts as the Proton donor/acceptor in catalysis. The tract at residues 163–191 is disordered; that stretch reads GSPVYGSRYQGQRGPTPSRSWQNFHRTKI. Positions 171–191 are enriched in polar residues; sequence YQGQRGPTPSRSWQNFHRTKI.

This sequence belongs to the dCTP deaminase family. As to quaternary structure, homotrimer.

The catalysed reaction is dCTP + 2 H2O = dUMP + NH4(+) + diphosphate. It participates in pyrimidine metabolism; dUMP biosynthesis; dUMP from dCTP: step 1/1. In terms of biological role, bifunctional enzyme that catalyzes both the deamination of dCTP to dUTP and the hydrolysis of dUTP to dUMP without releasing the toxic dUTP intermediate. The polypeptide is dCTP deaminase, dUMP-forming (Acidothermus cellulolyticus (strain ATCC 43068 / DSM 8971 / 11B)).